The sequence spans 1012 residues: Ubiquitin-like modifier-activating enzyme 7 (1012 aa).

The 1-1 repeat unit spans residues 23-159; that stretch reads GSPAMQRIQG…DTRGLVGQLF (137 aa). Residues 23-575 are 2 approximate repeats; it reads GSPAMQRIQG…GTWGSATVFM (553 aa). At Ser-266 the chain carries Phosphoserine. Residues 423–575 form a 1-2 repeat; it reads GAGFQEKLRR…GTWGSATVFM (153 aa). 442–471 serves as a coordination point for ATP; the sequence is AIGCELLKVFALVGLGAGNSGGLTVVDMDH. The active-site Glycyl thioester intermediate is Cys-599.

It belongs to the ubiquitin-activating E1 family. In terms of assembly, (Microbial infection) Interacts with human cytomegalovirus proteins NEC2/UL50 and UL26; these interactions inhibit ISGylation and cause proteasomal degradation of UBA7. As to quaternary structure, (Microbial infection) Interacts with rotavirus non-structural protein 5 (NSP5); this interaction promotes UBA7 proteasomal degradation. Monomer. Binds and is involved in the conjugation of G1P2/ISG15. Post-translationally, ISGylated. In terms of processing, ubiquitinated by RNF170. In terms of tissue distribution, expressed in a variety of normal and tumor cell types, but is reduced in lung cancer cell lines.

The protein localises to the cytoplasm. Its subcellular location is the nucleus. Its pathway is protein modification; protein ubiquitination. E1-activating enzyme that catalyzes the covalent conjugation of the ubiquitin-like protein product of ISG15 to additional interferon stimulated proteins (ISGs) as well as other cellular proteins such as P53 in a process termed protein ISGylation. Plays an essential role in antiviral immunity together with ISG15 by restricting the replication of many viruses including rabies virus, influenza virus, sindbis virus, rotavirus or human cytomegalovirus. For example, ISG15 modification of influenza A protein NS1 disrupts the association of the NS1 with importin-alpha leading to NS1 nuclear import inhibition. ISGylation of human cytomegalovirs protein UL26 regulates its stability and inhibits its activities to suppress NF-kappa-B signaling. This chain is Ubiquitin-like modifier-activating enzyme 7, found in Homo sapiens (Human).